The primary structure comprises 1098 residues: MGLPGVIPALVLRGQLLLSVLWLLGPQTSRGLVITPPGPEFVLNISSTFVLTCSGSAPVMWEQMSQVPWQEAAMNQDGTFSSVLTLTNVTGGDTGEYFCVYNNSLGPELSERKRIYIFVPDPTMGFLPMDSEDLFIFVTDVTETTIPCRVTDPQLEVTLHEKKVDIPLHVPYDHQRGFTGTFEDKTYICKTTIGDREVDSDTYYVYSLQVSSINVSVNAVQTVVRQGESITIRCIVMGNDVVNFQWTYPRMKSGRLVEPVTDYLFGVPSRIGSILHIPTAELSDSGTYTCNVSVSVNDHGDEKAINISVIENGYVRLLETLGDVEIAELHRSRTLRVVFEAYPMPSVLWLKDNRTLGDSGAGELVLSTRNMSETRYVSELILVRVKVSEAGYYTMRAFHEDDEVQLSFKLQVNVPVRVLELSESHPANGEQTIRCRGRGMPQPNVTWSTCRDLKRCPRKLSPTPLGNSSKEESQLETNVTFWEEDQEYEVVSTLRLRHVDQPLSVRCMLQNSMGGDSQEVTVVPHSLPFKVVVISAILALVVLTVISLIILIMLWQKKPRYEIRWKVIESVSSDGHEYIYVDPVQLPYDSTWELPRDQLVLGRTLGSGAFGQVVEATAHGLSHSQATMKVAVKMLKSTARSSEKQALMSELKIMSHLGPHLNVVNLLGACTKGGPIYIITEYCRYGDLVDYLHRNKHTFLQRHSNKHCPPSAELYSNALPVGFSLPSHLNLTGESDGGYMDMSKDESIDYVPMLDMKGDIKYADIESPSYMAPYDNYVPSAPERTYRATLINDSPVLSYTDLVGFSYQVANGMDFLASKNCVHRDLAARNVLICEGKLVKICDFGLARDIMRDSNYISKGSTFLPLKWMAPESIFNSLYTTLSDVWSFGILLWEIFTLGGTPYPELPMNDQFYNAIKRGYRMAQPAHASDEIYEIMQKCWEEKFETRPPFSQLVLLLERLLGEGYKKKYQQVDEEFLRSDHPAILRSQARFPGIHSLRSPLDTSSVLYTAVQPNESDNDYIIPLPDPKPDVADEGLPEGSPSLASSTLNEVNTSSTISCDSPLELQEEPQQAEPEAQLEQPQDSGCPGPLAEAEDSFL.

The signal sequence occupies residues 1-31 (MGLPGVIPALVLRGQLLLSVLWLLGPQTSRG). At 32 to 531 (LVITPPGPEF…VVPHSLPFKV (500 aa)) the chain is on the extracellular side. 5 Ig-like C2-type domains span residues 33–119 (VITP…YIFV), 128–209 (PMDS…YSLQ), 213–308 (INVS…INIS), 330–402 (HRSR…HEDD), and 415–523 (PVRV…VTVV). Residues Asn44, Asn88, and Asn102 are each glycosylated (N-linked (GlcNAc...) asparagine). A disulfide bond links Cys53 and Cys99. A disulfide bridge connects residues Cys148 and Cys189. Residue Asn214 is glycosylated (N-linked (GlcNAc...) asparagine). Cys234 and Cys290 form a disulfide bridge. 7 N-linked (GlcNAc...) asparagine glycosylation sites follow: Asn291, Asn306, Asn353, Asn370, Asn444, Asn467, and Asn478. A disulfide bridge links Cys435 with Cys507. The chain crosses the membrane as a helical span at residues 532–552 (VVISAILALVVLTVISLIILI). Residues 553–1098 (MLWQKKPRYE…PLAEAEDSFL (546 aa)) are Cytoplasmic-facing. Phosphotyrosine; by autocatalysis occurs at positions 561, 578, and 580. Residues 599-961 (LVLGRTLGSG…QLVLLLERLL (363 aa)) enclose the Protein kinase domain. Residues 605 to 613 (LGSGAFGQV) and Lys633 each bind ATP. Phosphotyrosine; by ABL1 and ABL2 is present on Tyr685. Residues Tyr715, Tyr739, Tyr750, Tyr762, Tyr770, Tyr774, and Tyr777 each carry the phosphotyrosine; by autocatalysis modification. Residue Asp825 is the Proton acceptor of the active site. Tyr856 carries the phosphotyrosine; by autocatalysis modification. Phosphotyrosine; by ABL1 and ABL2 occurs at positions 933 and 969. A phosphotyrosine; by autocatalysis mark is found at Tyr1008 and Tyr1020. The tract at residues 1016–1098 (SDNDYIIPLP…PLAEAEDSFL (83 aa)) is disordered. Residues 1042–1059 (SLASSTLNEVNTSSTISC) show a composition bias toward polar residues. Residues 1062-1082 (PLELQEEPQQAEPEAQLEQPQ) show a composition bias toward low complexity.

Belongs to the protein kinase superfamily. Tyr protein kinase family. CSF-1/PDGF receptor subfamily. Interacts with homodimeric PDGFB and PDGFD, and with heterodimers formed by PDGFA and PDGFB. May also interact with homodimeric PDGFC. Monomer in the absence of bound ligand. Interaction with homodimeric PDGFB, heterodimers formed by PDGFA and PDGFB or homodimeric PDGFD, leads to receptor dimerization, where both PDGFRA homodimers and heterodimers with PDGFRB are observed. Interacts with SH2B2/APS. Interacts directly (tyrosine phosphorylated) with SHB. Interacts (tyrosine phosphorylated) with PIK3R1 and RASA1. Interacts (tyrosine phosphorylated) with CBL. Interacts (tyrosine phosphorylated) with SRC and SRC family kinases. Interacts (tyrosine phosphorylated) with PIK3C2B, maybe indirectly. Interacts (tyrosine phosphorylated) with SHC1, GRB7, GRB10 and NCK1. Interaction with GRB2 is mediated by SHC1. Interacts (via C-terminus) with NHERF1. Post-translationally, autophosphorylated on tyrosine residues upon ligand binding. Autophosphorylation occurs in trans, i.e. one subunit of the dimeric receptor phosphorylates tyrosine residues on the other subunit. Phosphorylation at Tyr-578, and to a lesser degree, Tyr-580 is important for interaction with SRC. Phosphorylation at Tyr-715 is important for interaction with GRB2. Phosphorylation at Tyr-739 and Tyr-750 is important for interaction with PIK3R1. Phosphorylation at Tyr-750 is important for interaction with NCK1. Phosphorylation at Tyr-770 and Tyr-856 is important for interaction with RASA1/GAP. Phosphorylation at Tyr-856 is important for efficient phosphorylation of PLCG1 and PTPN11, resulting in increased phosphorylation of AKT1, MAPK1/ERK2 and/or MAPK3/ERK1, PDCD6IP/ALIX and STAM, and in increased cell proliferation. Phosphorylation at Tyr-1008 is important for interaction with PTPN11. Phosphorylation at Tyr-1008 and Tyr-1020 is important for interaction with PLCG1. Dephosphorylated by PTPRJ at Tyr-750, Tyr-856, Tyr-1008 and Tyr-1020. Dephosphorylated by PTPN2 at Tyr-578 and Tyr-1020. In terms of processing, N-glycosylated. Ubiquitinated. After autophosphorylation, the receptor is polyubiquitinated, leading to its degradation. In terms of tissue distribution, weakly expressed in glomerular mesangial cells and interstitial cells. Up-regulated in areas of renal fibrosis. In mice with unilateral ureteral obstruction, increased expression in interstitial cells at day 4 and expression is markedly elevated at day 7 and is maximal at day 14.

It is found in the cell membrane. The protein resides in the cytoplasmic vesicle. Its subcellular location is the lysosome lumen. The catalysed reaction is L-tyrosyl-[protein] + ATP = O-phospho-L-tyrosyl-[protein] + ADP + H(+). With respect to regulation, present in an inactive conformation in the absence of bound ligand. Binding of PDGFB and/or PDGFD leads to dimerization and activation by autophosphorylation on tyrosine residues. Tyrosine-protein kinase that acts as a cell-surface receptor for homodimeric PDGFB and PDGFD and for heterodimers formed by PDGFA and PDGFB, and plays an essential role in the regulation of embryonic development, cell proliferation, survival, differentiation, chemotaxis and migration. Plays an essential role in blood vessel development by promoting proliferation, migration and recruitment of pericytes and smooth muscle cells to endothelial cells. Plays a role in the migration of vascular smooth muscle cells and the formation of neointima at vascular injury sites. Required for normal development of the cardiovascular system. Required for normal recruitment of pericytes (mesangial cells) in the kidney glomerulus, and for normal formation of a branched network of capillaries in kidney glomeruli. Promotes rearrangement of the actin cytoskeleton and the formation of membrane ruffles. Binding of its cognate ligands - homodimeric PDGFB, heterodimers formed by PDGFA and PDGFB or homodimeric PDGFD -leads to the activation of several signaling cascades; the response depends on the nature of the bound ligand and is modulated by the formation of heterodimers between PDGFRA and PDGFRB. Phosphorylates PLCG1, PIK3R1, PTPN11, RASA1/GAP, CBL, SHC1 and NCK1. Activation of PLCG1 leads to the production of the cellular signaling molecules diacylglycerol and inositol 1,4,5-trisphosphate, mobilization of cytosolic Ca(2+) and the activation of protein kinase C. Phosphorylation of PIK3R1, the regulatory subunit of phosphatidylinositol 3-kinase, leads to the activation of the AKT1 signaling pathway. Phosphorylation of SHC1, or of the C-terminus of PTPN11, creates a binding site for GRB2, resulting in the activation of HRAS, RAF1 and down-stream MAP kinases, including MAPK1/ERK2 and/or MAPK3/ERK1. Promotes phosphorylation and activation of SRC family kinases. Promotes phosphorylation of PDCD6IP/ALIX and STAM. Receptor signaling is down-regulated by protein phosphatases that dephosphorylate the receptor and its down-stream effectors, and by rapid internalization of the activated receptor. The chain is Platelet-derived growth factor receptor beta (Pdgfrb) from Mus musculus (Mouse).